The following is a 188-amino-acid chain: Guanylate kinase (188 aa).

The Guanylate kinase-like domain occupies 2-183 (TKLIIISAPS…CVEQIRKAIA (182 aa)). Residue 9 to 16 (APSGTGKS) coordinates ATP.

This sequence belongs to the guanylate kinase family.

Its subcellular location is the cytoplasm. It catalyses the reaction GMP + ATP = GDP + ADP. Functionally, essential for recycling GMP and indirectly, cGMP. This Porphyromonas gingivalis (strain ATCC BAA-308 / W83) protein is Guanylate kinase.